A 336-amino-acid polypeptide reads, in one-letter code: Structure-specific endonuclease subunit SLX1 (336 aa).

The 84-residue stretch at 21 to 104 (SFYGVYLLQS…QHCHETRHIK (84 aa)) folds into the GIY-YIG domain. The interval 37–57 (FYIGSTPDPPRRLRQHNGDLK) is disordered. The SLX1-type zinc finger occupies 214–290 (CALCLEPIEQ…PATVNRCCSC (77 aa)).

This sequence belongs to the SLX1 family. Forms a heterodimer with SLX4. It depends on a divalent metal cation as a cofactor.

The protein resides in the nucleus. Catalytic subunit of the SLX1-SLX4 structure-specific endonuclease that resolves DNA secondary structures generated during DNA repair and recombination. Has endonuclease activity towards branched DNA substrates, introducing single-strand cuts in duplex DNA close to junctions with ss-DNA. This is Structure-specific endonuclease subunit SLX1 from Scheffersomyces stipitis (strain ATCC 58785 / CBS 6054 / NBRC 10063 / NRRL Y-11545) (Yeast).